A 560-amino-acid chain; its full sequence is Light-independent protochlorophyllide reductase subunit N (560 aa).

Residues C24, C49, and C109 each coordinate [4Fe-4S] cluster. The segment covering 173–182 (NSLFNQSSNS) has biased composition (low complexity). Positions 173–210 (NSLFNQSSNSPENLKTLNTKKDTFQNSTENSKTFSAEK) are disordered. Residues 196 to 206 (FQNSTENSKTF) are compositionally biased toward polar residues.

The protein belongs to the BchN/ChlN family. As to quaternary structure, protochlorophyllide reductase is composed of three subunits; ChlL, ChlN and ChlB. Forms a heterotetramer of two ChlB and two ChlN subunits. It depends on [4Fe-4S] cluster as a cofactor.

It is found in the plastid. The protein localises to the chloroplast. It carries out the reaction chlorophyllide a + oxidized 2[4Fe-4S]-[ferredoxin] + 2 ADP + 2 phosphate = protochlorophyllide a + reduced 2[4Fe-4S]-[ferredoxin] + 2 ATP + 2 H2O. It participates in porphyrin-containing compound metabolism; chlorophyll biosynthesis (light-independent). Functionally, component of the dark-operative protochlorophyllide reductase (DPOR) that uses Mg-ATP and reduced ferredoxin to reduce ring D of protochlorophyllide (Pchlide) to form chlorophyllide a (Chlide). This reaction is light-independent. The NB-protein (ChlN-ChlB) is the catalytic component of the complex. The sequence is that of Light-independent protochlorophyllide reductase subunit N from Tetradesmus obliquus (Green alga).